The following is a 428-amino-acid chain: 3-phosphoshikimate 1-carboxyvinyltransferase (428 aa).

Residues lysine 22, serine 23, and arginine 27 each coordinate 3-phosphoshikimate. Lysine 22 contacts phosphoenolpyruvate. Phosphoenolpyruvate is bound by residues glycine 96 and arginine 124. The 3-phosphoshikimate site is built by serine 171, serine 172, glutamine 173, serine 198, aspartate 311, and lysine 338. A phosphoenolpyruvate-binding site is contributed by glutamine 173. Aspartate 311 (proton acceptor) is an active-site residue. Phosphoenolpyruvate contacts are provided by arginine 342 and arginine 383.

It belongs to the EPSP synthase family. In terms of assembly, monomer.

Its subcellular location is the cytoplasm. The enzyme catalyses 3-phosphoshikimate + phosphoenolpyruvate = 5-O-(1-carboxyvinyl)-3-phosphoshikimate + phosphate. The protein operates within metabolic intermediate biosynthesis; chorismate biosynthesis. Its function is as follows. Catalyzes the transfer of the enolpyruvyl moiety of phosphoenolpyruvate (PEP) to the 5-hydroxyl of shikimate-3-phosphate (S3P) to produce enolpyruvyl shikimate-3-phosphate and inorganic phosphate. In Methanopyrus kandleri (strain AV19 / DSM 6324 / JCM 9639 / NBRC 100938), this protein is 3-phosphoshikimate 1-carboxyvinyltransferase.